Reading from the N-terminus, the 711-residue chain is HTYRPIAREEIQCAIKGWKPSAPGSDGLTVQAITRTRLPRNFVQLHLLRGHVPTPWTAMRTTLIPKDGDLENPSNWRPITIASALQRLLHRILAKRLEAAVELHPAQKGYARIDGTLVNSLLLDTYISSRREQRKTYNVVSLDVRKAFDTVSHSSICRALQRLGIDEGTSNYITGSLSDSTTTIRVGPGSQTRKICIRRGVKQGDPLSPFLFNAVLDELLCSLQSTPGIGGTIGEEKIPVLAFADDLLLLEDNDVLLPTTLATVANFFRLRGMSLNAKKSVSISVAASGGVCIPRTKPFLRVDNVLLPVTDRMQTFRYLGHFFGLSGAAKPTVYNLSRWLKCVEAAPLKPEQKLSLIREHVVPKLLYGLQNPSVTARTLRDADKLIRTTVKRCLHLHLHTPNQCFYARVRDGGLGLTDLRRSIPRIMLDRINARRSSDPMAVALFSCPSFDHLRGRLVALAGDVPPSHFWREAIANHTTTKGLEAASDDPASRSWIFRKPYGWSGKDFVRAIHLRTGNLPTKAIPSNPAGERLCRGGCGKQATISHVLQRCPVVQPERIRRHNEIARKIAAHCRSKGWTVEEEPHIRHPLGHLYKPDIVIHREGLPSVVCDVQVSWDGYEPLDEAWRNKQRTYDHDLFRTAAGRRWPGKTFLHLPAILGARGIWPRCNSETASALAFTNQLKASWLHSCLKWDSTLHTSFMRAVWSRQAGA.

The Reverse transcriptase domain maps to 45–323 (LHLLRGHVPT…QTFRYLGHFF (279 aa)). The segment at 444-711 (LFSCPSFDHL…RAVWSRQAGA (268 aa)) is nucleic acid-binding endonuclease.

The catalysed reaction is DNA(n) + a 2'-deoxyribonucleoside 5'-triphosphate = DNA(n+1) + diphosphate. The sequence is that of Retrovirus-related Pol polyprotein from type-1 retrotransposable element R2 from Popillia japonica (Japanese beetle).